The following is a 185-amino-acid chain: 4-hydroxy-tetrahydrodipicolinate reductase (185 aa).

NAD(+) contacts are provided by residues 12–17 (GAGGRM) and E38. R39 provides a ligand contact to NADP(+). Residues 102–104 (GTT) and 126–129 (AANF) each bind NAD(+). H159 (proton donor/acceptor) is an active-site residue. Position 160 (H160) interacts with (S)-2,3,4,5-tetrahydrodipicolinate. The Proton donor role is filled by K163. 169-170 (GT) lines the (S)-2,3,4,5-tetrahydrodipicolinate pocket.

This sequence belongs to the DapB family. As to quaternary structure, homotetramer.

Its subcellular location is the cytoplasm. The enzyme catalyses (S)-2,3,4,5-tetrahydrodipicolinate + NAD(+) + H2O = (2S,4S)-4-hydroxy-2,3,4,5-tetrahydrodipicolinate + NADH + H(+). It carries out the reaction (S)-2,3,4,5-tetrahydrodipicolinate + NADP(+) + H2O = (2S,4S)-4-hydroxy-2,3,4,5-tetrahydrodipicolinate + NADPH + H(+). It functions in the pathway amino-acid biosynthesis; L-lysine biosynthesis via DAP pathway; (S)-tetrahydrodipicolinate from L-aspartate: step 4/4. Catalyzes the conversion of 4-hydroxy-tetrahydrodipicolinate (HTPA) to tetrahydrodipicolinate. The polypeptide is 4-hydroxy-tetrahydrodipicolinate reductase (dapB) (Klebsiella pneumoniae).